Reading from the N-terminus, the 89-residue chain is Neuropeptide S (89 aa).

Positions 1 to 23 (MIGSLKLSFVLALSLSVMHVLWC) are cleaved as a signal peptide. Residues 24-69 (YPVLSSKVPGKPDYFLILLSSCPARLEGSDRLAFLKPILEKTSMKR) constitute a propeptide that is removed on maturation.

It localises to the secreted. Its function is as follows. May play an important anorexigenic role. Modulates arousal and anxiety as well as increases locomotor activity. Binds to its receptor NPSR1 with nanomolar affinity to increase intracellular calcium concentrations. This Mus musculus (Mouse) protein is Neuropeptide S (Nps).